Reading from the N-terminus, the 380-residue chain is F-box protein At4g18380 (380 aa).

The 49-residue stretch at isoleucine 22–valine 70 folds into the F-box domain.

This Arabidopsis thaliana (Mouse-ear cress) protein is F-box protein At4g18380.